We begin with the raw amino-acid sequence, 448 residues long: UDP-N-acetylmuramoylalanine--D-glutamate ligase (448 aa).

Residue 116 to 122 (GSNAKST) coordinates ATP.

The protein belongs to the MurCDEF family.

The protein resides in the cytoplasm. It carries out the reaction UDP-N-acetyl-alpha-D-muramoyl-L-alanine + D-glutamate + ATP = UDP-N-acetyl-alpha-D-muramoyl-L-alanyl-D-glutamate + ADP + phosphate + H(+). The protein operates within cell wall biogenesis; peptidoglycan biosynthesis. Cell wall formation. Catalyzes the addition of glutamate to the nucleotide precursor UDP-N-acetylmuramoyl-L-alanine (UMA). The sequence is that of UDP-N-acetylmuramoylalanine--D-glutamate ligase from Pseudomonas syringae pv. tomato (strain ATCC BAA-871 / DC3000).